Reading from the N-terminus, the 149-residue chain is Large ribosomal subunit protein bL9 (149 aa).

It belongs to the bacterial ribosomal protein bL9 family.

Binds to the 23S rRNA. The polypeptide is Large ribosomal subunit protein bL9 (Salmonella agona (strain SL483)).